Reading from the N-terminus, the 553-residue chain is Chaperonin GroEL (553 aa).

ATP contacts are provided by residues 29-32 (TLGP), lysine 50, 86-90 (DGTTT), glycine 424, and aspartate 504.

This sequence belongs to the chaperonin (HSP60) family. As to quaternary structure, forms a cylinder of 14 subunits composed of two heptameric rings stacked back-to-back. Interacts with the co-chaperonin GroES.

It is found in the cytoplasm. It carries out the reaction ATP + H2O + a folded polypeptide = ADP + phosphate + an unfolded polypeptide.. Functionally, together with its co-chaperonin GroES, plays an essential role in assisting protein folding. The GroEL-GroES system forms a nano-cage that allows encapsulation of the non-native substrate proteins and provides a physical environment optimized to promote and accelerate protein folding. The polypeptide is Chaperonin GroEL (Koribacter versatilis (strain Ellin345)).